A 127-amino-acid chain; its full sequence is Small ribosomal subunit protein uS12m (127 aa).

The protein belongs to the universal ribosomal protein uS12 family.

Its subcellular location is the mitochondrion. Functionally, protein S12 is involved in the translation initiation step. In Chondrus crispus (Carrageen Irish moss), this protein is Small ribosomal subunit protein uS12m (RPS12).